The sequence spans 489 residues: 3-octaprenyl-4-hydroxybenzoate carboxy-lyase (489 aa).

Asn-172 serves as a coordination point for Mn(2+). Residues Ile-175–Arg-177, Arg-189–Leu-191, and Arg-194–Gly-195 each bind prenylated FMN. Glu-238 is a Mn(2+) binding site. Asp-287 serves as the catalytic Proton donor.

It belongs to the UbiD family. In terms of assembly, homohexamer. It depends on prenylated FMN as a cofactor. The cofactor is Mn(2+).

It is found in the cell membrane. It carries out the reaction a 4-hydroxy-3-(all-trans-polyprenyl)benzoate + H(+) = a 2-(all-trans-polyprenyl)phenol + CO2. It functions in the pathway cofactor biosynthesis; ubiquinone biosynthesis. Its function is as follows. Catalyzes the decarboxylation of 3-octaprenyl-4-hydroxy benzoate to 2-octaprenylphenol, an intermediate step in ubiquinone biosynthesis. This Klebsiella pneumoniae (strain 342) protein is 3-octaprenyl-4-hydroxybenzoate carboxy-lyase.